The chain runs to 75 residues: Sec-independent protein translocase protein TatA (75 aa).

A helical transmembrane segment spans residues 1 to 21 (MGSFSIWHWLIVLVIIALVFG). Residues 45-75 (DASADKPADQVTQQRVSDDTIDVQAKEKSNS) are disordered.

This sequence belongs to the TatA/E family. As to quaternary structure, the Tat system comprises two distinct complexes: a TatABC complex, containing multiple copies of TatA, TatB and TatC subunits, and a separate TatA complex, containing only TatA subunits. Substrates initially bind to the TatABC complex, which probably triggers association of the separate TatA complex to form the active translocon.

It localises to the cell inner membrane. In terms of biological role, part of the twin-arginine translocation (Tat) system that transports large folded proteins containing a characteristic twin-arginine motif in their signal peptide across membranes. TatA could form the protein-conducting channel of the Tat system. The protein is Sec-independent protein translocase protein TatA of Bordetella bronchiseptica (strain ATCC BAA-588 / NCTC 13252 / RB50) (Alcaligenes bronchisepticus).